A 152-amino-acid polypeptide reads, in one-letter code: SsrA-binding protein (152 aa).

Positions 124–152 (KKLHDKRDTAAERDWQRDKARLMKGDRGD) are disordered. The span at 128–152 (DKRDTAAERDWQRDKARLMKGDRGD) shows a compositional bias: basic and acidic residues.

This sequence belongs to the SmpB family.

The protein resides in the cytoplasm. Required for rescue of stalled ribosomes mediated by trans-translation. Binds to transfer-messenger RNA (tmRNA), required for stable association of tmRNA with ribosomes. tmRNA and SmpB together mimic tRNA shape, replacing the anticodon stem-loop with SmpB. tmRNA is encoded by the ssrA gene; the 2 termini fold to resemble tRNA(Ala) and it encodes a 'tag peptide', a short internal open reading frame. During trans-translation Ala-aminoacylated tmRNA acts like a tRNA, entering the A-site of stalled ribosomes, displacing the stalled mRNA. The ribosome then switches to translate the ORF on the tmRNA; the nascent peptide is terminated with the 'tag peptide' encoded by the tmRNA and targeted for degradation. The ribosome is freed to recommence translation, which seems to be the essential function of trans-translation. The sequence is that of SsrA-binding protein from Caulobacter vibrioides (strain ATCC 19089 / CIP 103742 / CB 15) (Caulobacter crescentus).